The primary structure comprises 448 residues: Cytoplasmic tRNA 2-thiolation protein 2 (448 aa).

It belongs to the CTU2/NCS2 family.

Its subcellular location is the cytoplasm. The protein operates within tRNA modification; 5-methoxycarbonylmethyl-2-thiouridine-tRNA biosynthesis. Functionally, plays a central role in 2-thiolation of mcm(5)S(2)U at tRNA wobble positions of tRNA(Lys), tRNA(Glu) and tRNA(Gln). May act by forming a heterodimer with NCS6 that ligates sulfur from thiocarboxylated URM1 onto the uridine of tRNAs at wobble position. Prior mcm(5) tRNA modification by the elongator complex is required for 2-thiolation. May also be involved in protein urmylation. The polypeptide is Cytoplasmic tRNA 2-thiolation protein 2 (Debaryomyces hansenii (strain ATCC 36239 / CBS 767 / BCRC 21394 / JCM 1990 / NBRC 0083 / IGC 2968) (Yeast)).